The chain runs to 199 residues: Recombination protein RecR (199 aa).

The C4-type zinc finger occupies 58–73 (CKKCFNLTSEDECEIC). Residues 81-175 (KLICVVAETK…KVTRIAYGLP (95 aa)) form the Toprim domain.

It belongs to the RecR family.

Functionally, may play a role in DNA repair. It seems to be involved in an RecBC-independent recombinational process of DNA repair. It may act with RecF and RecO. The chain is Recombination protein RecR from Prochlorococcus marinus (strain MIT 9301).